A 188-amino-acid chain; its full sequence is NADH-quinone oxidoreductase subunit B 1 (188 aa).

Residues C32, C33, C98, and C128 each coordinate [4Fe-4S] cluster. Residues 153–188 (VGGVSRPDALASPADALPPRAADSLTAPPVRPPDPS) form a disordered region. The span at 157-177 (SRPDALASPADALPPRAADSL) shows a compositional bias: low complexity.

The protein belongs to the complex I 20 kDa subunit family. In terms of assembly, NDH-1 is composed of 14 different subunits. Subunits NuoB, C, D, E, F, and G constitute the peripheral sector of the complex. [4Fe-4S] cluster is required as a cofactor.

It is found in the cell membrane. It catalyses the reaction a quinone + NADH + 5 H(+)(in) = a quinol + NAD(+) + 4 H(+)(out). Its function is as follows. NDH-1 shuttles electrons from NADH, via FMN and iron-sulfur (Fe-S) centers, to quinones in the respiratory chain. The immediate electron acceptor for the enzyme in this species is believed to be a menaquinone. Couples the redox reaction to proton translocation (for every two electrons transferred, four hydrogen ions are translocated across the cytoplasmic membrane), and thus conserves the redox energy in a proton gradient. This is NADH-quinone oxidoreductase subunit B 1 (nuoB1) from Salinispora tropica (strain ATCC BAA-916 / DSM 44818 / JCM 13857 / NBRC 105044 / CNB-440).